Consider the following 2289-residue polypeptide: Protein Ycf2 (2289 aa).

1643 to 1650 (GSIGTGRS) contributes to the ATP binding site.

Belongs to the Ycf2 family.

Its subcellular location is the plastid. The protein resides in the chloroplast stroma. Its function is as follows. Probable ATPase of unknown function. Its presence in a non-photosynthetic plant (Epifagus virginiana) and experiments in tobacco indicate that it has an essential function which is probably not related to photosynthesis. The polypeptide is Protein Ycf2 (Capsella bursa-pastoris (Shepherd's purse)).